The following is a 205-amino-acid chain: Glycerol-3-phosphate acyltransferase 1 (205 aa).

5 helical membrane passes run 7–27 (TLIGYVFGNFLTAMIVGKLFL), 52–74 (WGILTCLGDLLKSLIALFIVYFV), 78–100 (HINIAYAGLGLILGHCFPIWNHF), 125–145 (LLIALILTAIMQNLTIPPLVF), and 160–180 (AGIVFMVITLIMVYKFWQDII).

The protein belongs to the PlsY family. In terms of assembly, probably interacts with PlsX.

The protein resides in the cell membrane. The enzyme catalyses an acyl phosphate + sn-glycerol 3-phosphate = a 1-acyl-sn-glycero-3-phosphate + phosphate. The protein operates within lipid metabolism; phospholipid metabolism. In terms of biological role, catalyzes the transfer of an acyl group from acyl-phosphate (acyl-PO(4)) to glycerol-3-phosphate (G3P) to form lysophosphatidic acid (LPA). This enzyme utilizes acyl-phosphate as fatty acyl donor, but not acyl-CoA or acyl-ACP. This Lactobacillus acidophilus (strain ATCC 700396 / NCK56 / N2 / NCFM) protein is Glycerol-3-phosphate acyltransferase 1.